A 231-amino-acid polypeptide reads, in one-letter code: Superoxide dismutase [Mn] 1, mitochondrial (231 aa).

The transit peptide at 1 to 29 directs the protein to the mitochondrion; it reads MAIRCVASRKTLAGLKETSSRLLRIRGIQ. The Mn(2+) site is built by H55 and H103. S124 is subject to Phosphoserine. Mn(2+) contacts are provided by D192 and H196.

Belongs to the iron/manganese superoxide dismutase family. As to quaternary structure, homotetramer. Mn(2+) is required as a cofactor.

It is found in the mitochondrion matrix. It carries out the reaction 2 superoxide + 2 H(+) = H2O2 + O2. Activated by MTM1. Its function is as follows. Destroys superoxide anion radicals which are normally produced within the cells and which are toxic to biological systems. The polypeptide is Superoxide dismutase [Mn] 1, mitochondrial (MSD1) (Arabidopsis thaliana (Mouse-ear cress)).